Here is a 317-residue protein sequence, read N- to C-terminus: Dehydrogenase/reductase SDR family protein 7-like (317 aa).

The Cytoplasmic segment spans residues 1–10; that stretch reads MKNLAERSAG. Residues 11–31 traverse the membrane as a helical; Signal-anchor for type II membrane protein segment; the sequence is SLYWWLLATLFLPIAIPGLVL. Residues 32–317 lie on the Peroxisomal side of the membrane; the sequence is KLLTMMKEQR…KKRAEKLNST (286 aa). Position 52–76 (52–76) interacts with NAD(+); sequence LITGASSGLGEALAHSFFLAGCKVV. Ser189 contacts substrate. Tyr202 functions as the Proton acceptor in the catalytic mechanism.

This sequence belongs to the short-chain dehydrogenases/reductases (SDR) family.

The protein localises to the peroxisome membrane. Functionally, putative oxidoreductase. The polypeptide is Dehydrogenase/reductase SDR family protein 7-like (Anopheles gambiae (African malaria mosquito)).